Consider the following 209-residue polypeptide: Peptide methionine sulfoxide reductase MsrA (209 aa).

The active site involves C14. Positions F183–H209 are disordered. Polar residues predominate over residues L199–H209.

The protein belongs to the MsrA Met sulfoxide reductase family.

The catalysed reaction is L-methionyl-[protein] + [thioredoxin]-disulfide + H2O = L-methionyl-(S)-S-oxide-[protein] + [thioredoxin]-dithiol. It catalyses the reaction [thioredoxin]-disulfide + L-methionine + H2O = L-methionine (S)-S-oxide + [thioredoxin]-dithiol. Has an important function as a repair enzyme for proteins that have been inactivated by oxidation. Catalyzes the reversible oxidation-reduction of methionine sulfoxide in proteins to methionine. This is Peptide methionine sulfoxide reductase MsrA from Pseudomonas fluorescens.